The following is a 133-amino-acid chain: Large-conductance mechanosensitive channel (133 aa).

2 helical membrane passes run 17–37 (AFILKGNVVELAVAVIIGGAF) and 73–93 (IGSFAGSVIDFLIIAFVLYLA).

The protein belongs to the MscL family. Homopentamer.

Its subcellular location is the cell inner membrane. Its function is as follows. Channel that opens in response to stretch forces in the membrane lipid bilayer. May participate in the regulation of osmotic pressure changes within the cell. The protein is Large-conductance mechanosensitive channel of Synechococcus elongatus (strain ATCC 33912 / PCC 7942 / FACHB-805) (Anacystis nidulans R2).